Here is a 122-residue protein sequence, read N- to C-terminus: Large ribosomal subunit protein uL24 (122 aa).

This sequence belongs to the universal ribosomal protein uL24 family. In terms of assembly, part of the 50S ribosomal subunit.

Its function is as follows. One of two assembly initiator proteins, it binds directly to the 5'-end of the 23S rRNA, where it nucleates assembly of the 50S subunit. Functionally, one of the proteins that surrounds the polypeptide exit tunnel on the outside of the subunit. The polypeptide is Large ribosomal subunit protein uL24 (Trichodesmium erythraeum (strain IMS101)).